The following is a 546-amino-acid chain: Probable protein kinase UbiB (546 aa).

Residues 124–502 form the Protein kinase domain; that stretch reads DFSVEPLASA…HVRQGQSRYL (379 aa). ATP-binding positions include 130-138 and lysine 153; that span reads LASASIAQV. Residue aspartate 288 is the Proton acceptor of the active site. 2 helical membrane-spanning segments follow: residues 501-521 and 522-542; these read YLFG…IHRP and EWGM…LIGW.

It belongs to the ABC1 family. UbiB subfamily.

It localises to the cell inner membrane. Its pathway is cofactor biosynthesis; ubiquinone biosynthesis [regulation]. Is probably a protein kinase regulator of UbiI activity which is involved in aerobic coenzyme Q (ubiquinone) biosynthesis. This Klebsiella pneumoniae subsp. pneumoniae (strain ATCC 700721 / MGH 78578) protein is Probable protein kinase UbiB.